The primary structure comprises 473 residues: Photosystem II CP43 reaction center protein (473 aa).

Residues 1–14 (MKTLYSLRRFYHVE) constitute a propeptide that is removed on maturation. Thr15 carries the N-acetylthreonine modification. Thr15 is modified (phosphothreonine). 5 consecutive transmembrane segments (helical) span residues 69–93 (LFEVAHFVPEKPMYEQGLILLPHLA), 134–155 (LLGPETLEESFPFFGYVWKDRN), 178–200 (KALFFGGIYDTWAPGGGDVRKIT), 255–275 (KPFAWARRALVWSGEAYLSYS), and 291–312 (WFNNTAYPSEFYGPTGPEASQA). Position 367 (Glu367) interacts with [CaMn4O5] cluster. The chain crosses the membrane as a helical span at residues 447–471 (RARAAAAGFEKGIDRDFEPVLSMTP).

The protein belongs to the PsbB/PsbC family. PsbC subfamily. PSII is composed of 1 copy each of membrane proteins PsbA, PsbB, PsbC, PsbD, PsbE, PsbF, PsbH, PsbI, PsbJ, PsbK, PsbL, PsbM, PsbT, PsbX, PsbY, PsbZ, Psb30/Ycf12, at least 3 peripheral proteins of the oxygen-evolving complex and a large number of cofactors. It forms dimeric complexes. Binds multiple chlorophylls and provides some of the ligands for the Ca-4Mn-5O cluster of the oxygen-evolving complex. It may also provide a ligand for a Cl- that is required for oxygen evolution. PSII binds additional chlorophylls, carotenoids and specific lipids. is required as a cofactor.

The protein localises to the plastid. The protein resides in the chloroplast thylakoid membrane. One of the components of the core complex of photosystem II (PSII). It binds chlorophyll and helps catalyze the primary light-induced photochemical processes of PSII. PSII is a light-driven water:plastoquinone oxidoreductase, using light energy to abstract electrons from H(2)O, generating O(2) and a proton gradient subsequently used for ATP formation. The sequence is that of Photosystem II CP43 reaction center protein from Fagopyrum esculentum subsp. ancestrale (Wild buckwheat).